Here is a 627-residue protein sequence, read N- to C-terminus: Ras and EF-hand domain-containing protein homolog (627 aa).

Residues 55 to 245 are a coiled coil; sequence YERVIRNFLR…RKLHDSNDGL (191 aa). Residues Ser-266 and Ser-272 each carry the phosphoserine modification. Residues 438–443, 541–544, and 578–579 each bind GTP; these read AVGKSS, NKAD, and AK.

It belongs to the small GTPase superfamily. Rab family. In terms of assembly, homodimer. Interacts with the dynein-dynactin complex.

The protein resides in the cytoplasm. It localises to the perinuclear region. Binds predominantly GDP, and also GTP. Acts as a dynein adapter protein that activates dynein-mediated transport and dynein-dynactin motility on microtubules. The polypeptide is Ras and EF-hand domain-containing protein homolog (Rasef) (Mus musculus (Mouse)).